We begin with the raw amino-acid sequence, 400 residues long: Tyrosine--tRNA ligase (400 aa).

Positions 42 to 51 match the 'HIGH' region motif; it reads PTAPDLHLGH. Residues 226 to 230 carry the 'KMSKS' region motif; that stretch reads KMSKS. Lys-229 is an ATP binding site. The region spanning 339 to 399 is the S4 RNA-binding domain; sequence FSISYILRRA…GKKKIAQIFV (61 aa).

The protein belongs to the class-I aminoacyl-tRNA synthetase family. TyrS type 2 subfamily. As to quaternary structure, homodimer.

It is found in the cytoplasm. It carries out the reaction tRNA(Tyr) + L-tyrosine + ATP = L-tyrosyl-tRNA(Tyr) + AMP + diphosphate + H(+). Catalyzes the attachment of tyrosine to tRNA(Tyr) in a two-step reaction: tyrosine is first activated by ATP to form Tyr-AMP and then transferred to the acceptor end of tRNA(Tyr). The polypeptide is Tyrosine--tRNA ligase (Hahella chejuensis (strain KCTC 2396)).